The sequence spans 138 residues: MTQMTVQVVTPDGIKYDHHAKCISVTTPDGEMGILPNHINLIAPLQVHEMKIRRGGEDEKVDWIAINGGIIEIKDNVVTVVADSAERDRDIDVSRAERAKLRAEREIAQAETTHNIDEVRRAKVALRRALNRINVSKK.

The protein belongs to the ATPase epsilon chain family. F-type ATPases have 2 components, CF(1) - the catalytic core - and CF(0) - the membrane proton channel. CF(1) has five subunits: alpha(3), beta(3), gamma(1), delta(1), epsilon(1). CF(0) has three main subunits: a, b and c.

Its subcellular location is the cell membrane. Functionally, produces ATP from ADP in the presence of a proton gradient across the membrane. The protein is ATP synthase epsilon chain of Streptococcus pyogenes serotype M3 (strain ATCC BAA-595 / MGAS315).